An 810-amino-acid polypeptide reads, in one-letter code: Venom phosphodiesterase 2 (810 aa).

A signal peptide spans 1–23 (MIQQKVLFISLVAVTLGLGLGLG). In terms of domain architecture, SMB spans 33-77 (QSWSCSKLRCGEKRIANVLCSCSDDCLEKKDCCTDYKSICKGETS). Disulfide bonds link C37–C42, C37–C54, C42–C72, C52–C54, C52–C65, C58–C64, C65–C72, C83–C129, and C91–C303. The a divalent metal cation site is built by D106 and T144. The AMP-threonine intermediate role is filled by T144. N-linked (GlcNAc...) asparagine glycosylation is found at N175, N218, and N229. Residue K230 coordinates AMP. Residues D264, H268, D311, and H312 each coordinate a divalent metal cation. AMP is bound at residue H268. 6 cysteine pairs are disulfide-bonded: C319/C416, C367/C752, C500/C558, C513/C613, C515/C598, and C721/C731. A glycan (N-linked (GlcNAc...) asparagine) is linked at N364. H421 serves as a coordination point for a divalent metal cation. N-linked (GlcNAc...) asparagine glycosylation is found at N471, N553, N633, and N704.

This sequence belongs to the nucleotide pyrophosphatase/phosphodiesterase family. In terms of assembly, monomer cleaved in two subunits; disulfide-linked. Is synthesized as a single-chain protein and is subsequently cleaved to form a two-subunit protein held together with disulfide bonds. The cofactor is a divalent metal cation. Expressed by venom gland.

It localises to the secreted. The enzyme catalyses ADP + H2O = AMP + phosphate + H(+). Hydrolyzes ADP with high activity. Shows weak or no activity on 5'-AMP, 5'-GMP, 3'-AMP, ATP, cAMP, and cGMP. Is devoid of monophosphatase and proteinase activities. Dose-dependently inhibits platelet aggregation induced by ADP (IC(50)=0.99 uM) and collagen (IC(50)=1.4 uM). This chain is Venom phosphodiesterase 2, found in Crotalus adamanteus (Eastern diamondback rattlesnake).